A 236-amino-acid polypeptide reads, in one-letter code: MTEHQNVDHAEIAKFEAIAERWWDLDGEFKPLHEINPLRLDFIANKTGGLFDKETLDVGCGGGILSQSMARMGAKVTGIDMGQEPLTVAKLHSLETGVNVEYIKVPAEQYASEHPARFDVVTCMEMLEHVPDPASIIHAVAELAKPGADVFFSTLNKTPKAYLYAIIGAEKLLKMVPEGTHDHKKFIKPAQLIAWAEQAGLKVRASAGLSYNPLSKQYSLNTDVSVNYILHFEKLA.

Residues arginine 39, glycine 59, aspartate 80, and methionine 124 each contribute to the S-adenosyl-L-methionine site.

It belongs to the methyltransferase superfamily. UbiG/COQ3 family.

The enzyme catalyses a 3-demethylubiquinol + S-adenosyl-L-methionine = a ubiquinol + S-adenosyl-L-homocysteine + H(+). It carries out the reaction a 3-(all-trans-polyprenyl)benzene-1,2-diol + S-adenosyl-L-methionine = a 2-methoxy-6-(all-trans-polyprenyl)phenol + S-adenosyl-L-homocysteine + H(+). The protein operates within cofactor biosynthesis; ubiquinone biosynthesis. Functionally, O-methyltransferase that catalyzes the 2 O-methylation steps in the ubiquinone biosynthetic pathway. This is Ubiquinone biosynthesis O-methyltransferase from Pseudoalteromonas translucida (strain TAC 125).